The primary structure comprises 339 residues: Alcohol dehydrogenase notN (339 aa).

Zn(2+) contacts are provided by C44, H65, E66, C99, C102, C110, and C152. H65 lines the an alcohol pocket. NAD(+) contacts are provided by residues 176-181, 196-201, K204, 263-265, 287-289, and 295-297; these read GLGGLG, VAISRG, LSF, PSG, and EDA.

The protein belongs to the zinc-containing alcohol dehydrogenase family. The cofactor is Zn(2+).

It catalyses the reaction a primary alcohol + NAD(+) = an aldehyde + NADH + H(+). The catalysed reaction is a secondary alcohol + NAD(+) = a ketone + NADH + H(+). Alcohol dehydrogenase; part of the gene cluster that mediates the biosynthesis of notoamide, a fungal indole alkaloid that belongs to a family of natural products containing a characteristic bicyclo[2.2.2]diazaoctane core. The first step of notoamide biosynthesis involves coupling of L-proline and L-tryptophan by the bimodular NRPS notE, to produce cyclo-L-tryptophan-L-proline called brevianamide F. The reverse prenyltransferase notF then acts as a deoxybrevianamide E synthase and converts brevianamide F to deoxybrevianamide E via reverse prenylation at C-2 of the indole ring leading to the bicyclo[2.2.2]diazaoctane core. Deoxybrevianamide E is further hydroxylated at C-6 of the indole ring, likely catalyzed by the cytochrome P450 monooxygenase notG, to yield 6-hydroxy-deoxybrevianamide E. 6-hydroxy-deoxybrevianamide E is a specific substrate of the prenyltransferase notC for normal prenylation at C-7 to produce 6-hydroxy-7-prenyl-deoxybrevianamide, also called notoamide S. As the proposed pivotal branching point in notoamide biosynthesis, notoamide S can be diverted to notoamide E through an oxidative pyran ring closure putatively catalyzed by either notH cytochrome P450 monooxygenase or the notD FAD-linked oxidoreductase. This step would be followed by an indole 2,3-epoxidation-initiated pinacol-like rearrangement catalyzed by the notB FAD-dependent monooxygenase leading to the formation of notoamide C and notoamide D. On the other hand notoamide S is converted to notoamide T by notH (or notD), a bifunctional oxidase that also functions as the intramolecular Diels-Alderase responsible for generation of (+)-notoamide T. To generate antipodal (-)-notoaminide T, notH' (or notD') in Aspergillus versicolor is expected to catalyze a Diels-Alder reaction leading to the opposite stereochemistry. The remaining oxidoreductase notD (or notH) likely catalyzes the oxidative pyran ring formation to yield (+)-stephacidin A. The FAD-dependent monooxygenase notI is highly similar to notB and is predicted to catalyze a similar conversion from (+)-stephacidin A to (-)-notoamide B via the 2,3-epoxidation of (+)-stephacidin A followed by a pinacol-type rearrangement. Finally, it remains unclear which enzyme could be responsible for the final hydroxylation steps leading to notoamide A and sclerotiamide. The function of notN in the notoamide biosynthesis has not been determined yet. In Aspergillus sp. (strain MF297-2), this protein is Alcohol dehydrogenase notN.